Consider the following 361-residue polypeptide: 3-dehydroquinate synthase (361 aa).

Residues 72 to 77 (SGEKEK), 130 to 131 (TT), Lys-142, and Lys-151 contribute to the NAD(+) site. 3 residues coordinate Zn(2+): Glu-184, His-247, and His-264.

Belongs to the sugar phosphate cyclases superfamily. Dehydroquinate synthase family. Requires Co(2+) as cofactor. The cofactor is Zn(2+). NAD(+) is required as a cofactor.

It localises to the cytoplasm. The enzyme catalyses 7-phospho-2-dehydro-3-deoxy-D-arabino-heptonate = 3-dehydroquinate + phosphate. It participates in metabolic intermediate biosynthesis; chorismate biosynthesis; chorismate from D-erythrose 4-phosphate and phosphoenolpyruvate: step 2/7. Its function is as follows. Catalyzes the conversion of 3-deoxy-D-arabino-heptulosonate 7-phosphate (DAHP) to dehydroquinate (DHQ). The protein is 3-dehydroquinate synthase of Bacillus cereus (strain B4264).